The primary structure comprises 660 residues: DNA mismatch repair protein MutL (660 aa).

Disordered stretches follow at residues 368–426 and 439–461; these read PQQT…PTKK and NREQ…STQQ. Low complexity predominate over residues 406–417; sequence SSSSNSTAPSRS.

The protein belongs to the DNA mismatch repair MutL/HexB family.

Functionally, this protein is involved in the repair of mismatches in DNA. It is required for dam-dependent methyl-directed DNA mismatch repair. May act as a 'molecular matchmaker', a protein that promotes the formation of a stable complex between two or more DNA-binding proteins in an ATP-dependent manner without itself being part of a final effector complex. This Aliivibrio fischeri (strain ATCC 700601 / ES114) (Vibrio fischeri) protein is DNA mismatch repair protein MutL.